We begin with the raw amino-acid sequence, 103 residues long: Small ribosomal subunit protein uS10 (103 aa).

It belongs to the universal ribosomal protein uS10 family. As to quaternary structure, part of the 30S ribosomal subunit.

In terms of biological role, involved in the binding of tRNA to the ribosomes. This is Small ribosomal subunit protein uS10 from Borreliella burgdorferi (strain ATCC 35210 / DSM 4680 / CIP 102532 / B31) (Borrelia burgdorferi).